The sequence spans 614 residues: MDLFNYSRRESSEVNIGATPLGGNNPIRIQSMTNTVTMDTEACVEQAKRIIDAGGEYVRLTTQGVREAENLKNINIGLRSQGYDTPLVADVHFNPKVADVAAQYAEKVRINPGNYVDPGRTFQKLEYTDEEYAQEIEKIRARFIPFLNICKENHTAIRIGVNHGSLSDRIMSHYGDTPEGMVESCMEFLRICVAEHFNDVVISIKASNTVVMVRTVRLLVKEMEKEGMAFPLHLGVTEAGDGEDGRIKSALGIGALLADGLGDTIRVSLSEAPENEIPVARKLVDYILTREGHPFIPGKEAPQFNYLSPGRRKTKAVRNIGGDNLPVVIAERLEGSFETNPQFKPDYIYCGGSVPQSRDNNIAYLVDANAWNPEDKNVYPAFNYQQMIELHHTVSDLKFLFLPYMAMNDEVIAALKLHPEVVIIAQSNHPNRLGEYRAMTHELMNEGLENPVVFFQYYQETKAEDLQIKAAADMGALIFDGLCDGIFLYNQGPLSHIVVDTTAFGILQAGRIRTSKTEYISCPGCGRTLYDLESTIARIKTATSHLKGLKIGIMGCIVNGPGEMADADYGYVGAGRGKISLYKKKECIEKNIPEDQAVEKLIELIKANGDYTEK.

[4Fe-4S] cluster-binding residues include Cys522, Cys525, Cys556, and Glu563.

The protein belongs to the IspG family. The cofactor is [4Fe-4S] cluster.

The enzyme catalyses (2E)-4-hydroxy-3-methylbut-2-enyl diphosphate + oxidized [flavodoxin] + H2O + 2 H(+) = 2-C-methyl-D-erythritol 2,4-cyclic diphosphate + reduced [flavodoxin]. It participates in isoprenoid biosynthesis; isopentenyl diphosphate biosynthesis via DXP pathway; isopentenyl diphosphate from 1-deoxy-D-xylulose 5-phosphate: step 5/6. Functionally, converts 2C-methyl-D-erythritol 2,4-cyclodiphosphate (ME-2,4cPP) into 1-hydroxy-2-methyl-2-(E)-butenyl 4-diphosphate. The sequence is that of 4-hydroxy-3-methylbut-2-en-1-yl diphosphate synthase (flavodoxin) from Phocaeicola vulgatus (strain ATCC 8482 / DSM 1447 / JCM 5826 / CCUG 4940 / NBRC 14291 / NCTC 11154) (Bacteroides vulgatus).